Consider the following 732-residue polypeptide: Integrator complex subunit 13 (732 aa).

Basic and acidic residues predominate over residues 564-648; that stretch reads PPEEEERKKR…DETPHMEKSK (85 aa). A disordered region spans residues 564-650; that stretch reads PPEEEERKKR…TPHMEKSKGP (87 aa). The Nuclear localization signal (NLS) motif lies at 572–582; sequence KRGRKREDRED. A Glycyl lysine isopeptide (Lys-Gly) (interchain with G-Cter in SUMO2) cross-link involves residue Lys611. 3 positions are modified to phosphoserine: Ser623, Ser626, and Ser678. Residues 649–694 form a cleavage module binding motif (CMBM) region; the sequence is GPVSLLSLWSNRINTANSRKHQEFAGRLNSVNNRAELYQHLKEENG.

Belongs to the Integrator subunit 13 family. Component of the Integrator complex, composed of core subunits INTS1, INTS2, INTS3, INTS4, INTS5, INTS6, INTS7, INTS8, INTS9/RC74, INTS10, INTS11/CPSF3L, INTS12, INTS13, INTS14 and INTS15. The core complex associates with protein phosphatase 2A subunits PPP2CA and PPP2R1A, to form the Integrator-PP2A (INTAC) complex. INTS13 is part of the tail subcomplex, composed of INTS10, INTS13, INTS14 and INTS15. Interacts with transcription factors ZNF609 and ZNF655. Interacts with PAFAH1B1; this interaction may be required for proper recruitment of dynein complexes to the nuclear envelope at prophase.

Its subcellular location is the nucleus. The protein localises to the cytoplasm. Functionally, component of the integrator complex, a multiprotein complex that terminates RNA polymerase II (Pol II) transcription in the promoter-proximal region of genes. The integrator complex provides a quality checkpoint during transcription elongation by driving premature transcription termination of transcripts that are unfavorably configured for transcriptional elongation: the complex terminates transcription by (1) catalyzing dephosphorylation of the C-terminal domain (CTD) of Pol II subunit POLR2A/RPB1 and SUPT5H/SPT5, (2) degrading the exiting nascent RNA transcript via endonuclease activity and (3) promoting the release of Pol II from bound DNA. The integrator complex is also involved in terminating the synthesis of non-coding Pol II transcripts, such as enhancer RNAs (eRNAs), small nuclear RNAs (snRNAs), telomerase RNAs and long non-coding RNAs (lncRNAs). Within the integrator complex, INTS13 is part of the integrator tail module and acts as a platform for the recruitment of transcription factors at promoters. At prophase, mediates recruitment of cytoplasmic dynein to the nuclear envelope, a step important for proper centrosome-nucleus coupling. At G2/M phase, may be required for proper spindle formation and execution of cytokinesis. In Mus musculus (Mouse), this protein is Integrator complex subunit 13.